We begin with the raw amino-acid sequence, 107 residues long: Integration host factor subunit beta (107 aa).

The segment at 54 to 107 (NRRPARVGRNPKSGEKVQVPEKHVPHFKPGKELRERVDGRAGEPLKNDEPEDGQ) is disordered. The span at 65 to 101 (KSGEKVQVPEKHVPHFKPGKELRERVDGRAGEPLKND) shows a compositional bias: basic and acidic residues.

Belongs to the bacterial histone-like protein family. Heterodimer of an alpha and a beta chain.

Its function is as follows. This protein is one of the two subunits of integration host factor, a specific DNA-binding protein that functions in genetic recombination as well as in transcriptional and translational control. The protein is Integration host factor subunit beta of Burkholderia thailandensis (strain ATCC 700388 / DSM 13276 / CCUG 48851 / CIP 106301 / E264).